A 310-amino-acid polypeptide reads, in one-letter code: Methionyl-tRNA formyltransferase (310 aa).

109–112 contacts (6S)-5,6,7,8-tetrahydrofolate; the sequence is SLLP.

It belongs to the Fmt family.

The catalysed reaction is L-methionyl-tRNA(fMet) + (6R)-10-formyltetrahydrofolate = N-formyl-L-methionyl-tRNA(fMet) + (6S)-5,6,7,8-tetrahydrofolate + H(+). In terms of biological role, attaches a formyl group to the free amino group of methionyl-tRNA(fMet). The formyl group appears to play a dual role in the initiator identity of N-formylmethionyl-tRNA by promoting its recognition by IF2 and preventing the misappropriation of this tRNA by the elongation apparatus. The chain is Methionyl-tRNA formyltransferase from Pseudomonas paraeruginosa (strain DSM 24068 / PA7) (Pseudomonas aeruginosa (strain PA7)).